The sequence spans 258 residues: MDEEAEVAEIAVLGGVGFNSHKDCESHPVTTPYGRITAYLTSIKGRSVVIIPRHAEEIHIPPHRVNYRGNIWAAHSLGAKRVISTNSVGSMRGHPVGSFVVLDDFIDFTRSRPSTFHDDKTVHVDVSEPYCPEIRASLRYSLEKRGISYTEGVYACTEGPRFETRAEIRMMSQFADVVGMTGVPEVVLAKELSLCYASLSIVTNQACGMTTQKLTADEVTEVVGKAQASIFKILSDAIGKIPETRNCMCRFAKEGACL.

Position 53-54 (53-54 (RH)) interacts with phosphate. M180 serves as a coordination point for substrate. T181 is a phosphate binding site. 204–206 (NQA) is a substrate binding site.

This sequence belongs to the PNP/MTAP phosphorylase family. MTAP subfamily. Homotrimer.

It catalyses the reaction S-methyl-5'-thioinosine + phosphate = 5-(methylsulfanyl)-alpha-D-ribose 1-phosphate + hypoxanthine. The protein operates within purine metabolism; purine nucleoside salvage. Catalyzes the reversible phosphorylation of S-methyl-5'-thioinosine (MTI) to hypoxanthine and 5-methylthioribose-1-phosphate. Involved in the breakdown of S-methyl-5'-thioadenosine (MTA), a major by-product of polyamine biosynthesis. Catabolism of (MTA) occurs via deamination to MTI and phosphorolysis to hypoxanthine. The protein is Probable S-methyl-5'-thioinosine phosphorylase of Methanosarcina acetivorans (strain ATCC 35395 / DSM 2834 / JCM 12185 / C2A).